The chain runs to 681 residues: MNDLKPATSYRSTSLHDAVKLRLDEPSSFSQTVPPQTIPEFFKESCEKYSDLPALVWETPGSGNDGWTTLTFGEYQERVEQAALMLLSVGVEERSSVGILAFNCPEWFFAEFGALRAGAVVAGVYPSNSAEAVHHVLATGESSVCVVDDAQQMAKLRAIKERLPRLKAVIQLHGPFEAFVDHEPGYFSWQKLQEQTFSSELKEELLARESRIRANECAMLIFTSGTVGMPKAVMLSHDNLVFDTKSAAAHMQDIQVGKESFVSYLPLSHVAAQIFDVFLGLSHAGCVTFADKDALKGTLIKTFRKARPTKMFGVPRVFEKLQERLVAAEAKARPYSRLLLARARAAVAEHQTTLMAGKSPSIYGNAKYWLACRVVKPIREMIGVDNCRVFFTGGAPTSEELKQFFLGLDIALGECYGMSETSGAITLNVDISNLYSAGQACEGVTLKIHEPDCNGQGEILMRGRLVFMGYLGLPDKTEETVKEDGWLHSGDLGYIDPKGNLIISGRLKELIITAGGENIPPVHIEELIKKELPCVSNVLLIGDHRKYLTVLLSLKTKCDAKTGIPLDALREETIEWLRDLDIHETRLSELLNIPADLQLPNDTAALAATLEITAKPKLLEAIEEGIKRANKYAISNAQKVQKFALIAHEFSVATGELGPTLKIRRNIVHAKYAKVIERLYK.

ATP-binding positions include Thr223 to Lys231, Glu414 to Ser419, Asp491, Arg506, and Lys639.

The protein belongs to the ATP-dependent AMP-binding enzyme family. Bubblegum subfamily.

The enzyme catalyses a long-chain fatty acid + ATP + CoA = a long-chain fatty acyl-CoA + AMP + diphosphate. Functionally, mediates activation of long-chain fatty acids for both synthesis of cellular lipids, and degradation via beta-oxidation. Probably by regulating lipid storage and catabolism, plays a role in neuronal function. This is Long-chain-fatty-acid--CoA ligase heimdall from Drosophila melanogaster (Fruit fly).